A 5478-amino-acid polypeptide reads, in one-letter code: Mucin-12 (5478 aa).

Positions 1–16 (MLVIWILTLALRLCAS) are cleaved as a signal peptide. The Extracellular segment spans residues 17–5380 (VTTVTPEGSA…EFNIAKSLVY (5364 aa)). 3 N-linked (GlcNAc...) asparagine glycosylation sites follow: asparagine 154, asparagine 170, and asparagine 176. The interval 212 to 737 (LDSSTNSGHS…GSTETTLLPD (526 aa)) is disordered. Repeat 1 spans residues 222-240 (EESTVSHSGPGATGTTLFP). Residues 222–4761 (EESTVSHSGP…PGSTQTMHFP (4540 aa)) are 28 X 19 AA approximate tandem repeats of E-E-S-X-X-X-H-X-X-P-X-X-T-X-T-X-X-X-P. Polar residues-rich tracts occupy residues 226 to 246 (VSHS…SATS), 255 to 288 (SPIT…SSPR), 296 to 313 (PART…TSHS), and 325 to 342 (DSTT…SHSI). A compositionally biased stretch (low complexity) spans 343–366 (PGSTDTTLSPGTTTPSSLGPESTT). The span at 367 to 387 (FHSSPGYTKTTRLPDNTTTSG) shows a compositional bias: polar residues. Asparagine 382 carries an N-linked (GlcNAc...) asparagine glycan. Residues 396–413 (HSSTGSPHTTLSPSSSTT) show a composition bias toward low complexity. Residues 419-440 (TTFQSWPSSKDTSPAPSGTTSA) are compositionally biased toward polar residues. Low complexity-rich tracts occupy residues 445–466 (STTY…SSTT) and 478–495 (SSPV…SATS). A run of 2 repeats spans residues 471-489 (EEST…TPPP) and 499-517 (EEST…MHFP). Low complexity predominate over residues 531–554 (TFHGSTTHTKSSTPSTTAALAHTS). Composition is skewed to polar residues over residues 555 to 575 (YHSS…TISG) and 608 to 648 (STPS…SPDT). Low complexity predominate over residues 654 to 669 (SMTSSGVSEESTTSHS). Residues 662-680 (EESTTSHSRPGSTHTTAFP) form repeat 4. Composition is skewed to polar residues over residues 670–715 (RPGS…TASS) and 722–737 (TFHS…LLPD). Asparagine 738 carries N-linked (GlcNAc...) asparagine glycosylation. Disordered stretches follow at residues 749–4847 (MPVH…HFTT), 4887–5034 (SSRS…THTV), 5048–5071 (STAF…TASD), and 5093–5112 (ASSS…TSPS). Composition is skewed to polar residues over residues 751–783 (VHSS…WPSS) and 792–842 (TTTS…TQTM). Repeat 5 spans residues 827-845 (EESTTYHSSPGSTQTMHFP). Positions 859–877 (TSHSSTTHTISSAPSTTSA) are enriched in low complexity. Composition is skewed to polar residues over residues 884–899 (SYHS…HFPD) and 928–970 (RSTT…TTFH). The segment covering 971 to 1007 (SSPRSPATTLSPASTTSSGVSEESTTSRSRPGSTHTT) has biased composition (low complexity). Residues 1009-1021 (FPDSTTTPGLSRH) are compositionally biased toward polar residues. The span at 1022–1065 (STTSHSSPGSTDTTLLPASTTTSGPSQESTTSHSSSGSTDTALS) shows a compositional bias: low complexity. Polar residues-rich tracts occupy residues 1066–1101 (PGST…TSSG) and 1108–1138 (RVHS…TAFQ). A compositionally biased stretch (low complexity) spans 1139–1157 (THPASTHTTPSPPSTATAP). Repeat 6 spans residues 1159–1177 (EESTTYHRSPGSTPTTHFP). Polar residues-rich tracts occupy residues 1160–1184 (ESTT…TTSG) and 1191–1207 (IFHS…SSAH). Composition is skewed to low complexity over residues 1208 to 1220 (STTS…TTSR), 1229 to 1241 (TTLP…PGLS), and 1249 to 1262 (SSPR…SPAS). Composition is skewed to polar residues over residues 1271–1324 (ESTT…TTSV), 1331–1357 (TFHS…TEES), and 1364–1377 (PAST…TLTT). Low complexity-rich tracts occupy residues 1384–1396 (STTF…STGT) and 1411–1438 (ESTP…SLSE). Residues 1439–1448 (KSTTFYTSPR) are compositionally biased toward polar residues. The span at 1458-1481 (TTTSSGVSEESSTSHSQPGSTHTT) shows a compositional bias: low complexity. The stretch at 1466–1484 (EESSTSHSQPGSTHTTAFP) is repeat 7. Over residues 1483 to 1537 (FPDSTTTSDLSQEPTTSHSSQGSTEATLSPGSTTASSLGQQSTTFHSSPGDTETT) the composition is skewed to polar residues. The segment covering 1552–1568 (STPTHSSTGSLHTTLTP) has biased composition (low complexity). Polar residues-rich tracts occupy residues 1569-1586 (ASST…FQSW) and 1606-1630 (VSTT…TTLG). The stretch at 1633–1651 (EESTTVHSSPGATGTALFP) is repeat 8. Residues 1653-1708 (RSATSVLVGEPTTSPISSGSTETTALPGSTTTAGLSEKSTTFYSSPRSPDTTLSPA) show a composition bias toward polar residues. Positions 1709-1724 (STTSSGVSEESTTSHS) are enriched in low complexity. Copy 9 of the repeat occupies 1717-1735 (EESTTSHSRPGSTHTTAFP). 2 stretches are compositionally biased toward polar residues: residues 1725–1797 (RPGS…TTAS) and 1805–1840 (PVHS…SSKD). Asparagine 1793 carries N-linked (GlcNAc...) asparagine glycosylation. Composition is skewed to low complexity over residues 1856–1877 (STTS…SSTT) and 1889–1906 (SSPV…STTS). Tandem repeats lie at residues 1882–1900 (EEST…TPSP) and 1910–1928 (EEST…MHFP). A compositionally biased stretch (polar residues) spans 1914–1935 (AYHSSPGSTQTMHFPESSTASG). Low complexity predominate over residues 1943–1959 (SHSSTTHTISSPPSTTS). Polar residues-rich tracts occupy residues 1967-1982 (SYHS…HFPD) and 2011-2053 (RSTT…TTFH). Residues 2054-2082 (SSPRSPATTLSPASTTSSGVSEESTTSHS) are compositionally biased toward low complexity. The stretch at 2075-2093 (EESTTSHSRPGSTHTTAFP) is repeat 12. A compositionally biased stretch (polar residues) spans 2083 to 2104 (RPGSTHTTAFPDSTTTPGLSRH). The span at 2105–2130 (STTSHSSPGSTDTTLLPASTTTSGPS) shows a compositional bias: low complexity. Composition is skewed to polar residues over residues 2131-2184 (QEST…TSSG) and 2191-2221 (RVHS…TAFQ). A compositionally biased stretch (low complexity) spans 2222–2240 (THPASTHTTPSPPSTATAP). Copy 13 of the repeat occupies 2242–2260 (EESTTYHRSPGSTPTTHFP). Composition is skewed to polar residues over residues 2243 to 2267 (ESTT…TTSG) and 2274 to 2290 (IFHS…SSAH). 3 stretches are compositionally biased toward low complexity: residues 2291-2303 (STTS…TTSR), 2312-2324 (TTLP…PGLS), and 2332-2345 (SSPR…SPAS). Polar residues predominate over residues 2354-2392 (ESTTSRSQPGSTHSTVSPASTTTPGLSEESTTVYSSSPG). Positions 2393–2407 (STETTVFPRTPTTSV) are enriched in low complexity. 2 stretches are compositionally biased toward polar residues: residues 2414–2440 (TFHS…TEES) and 2447–2460 (PAST…TLTT). Low complexity-rich tracts occupy residues 2467–2483 (STTF…TLSP) and 2494–2521 (ESTP…SLSE). Residues 2522-2531 (KSTTFYTSPR) show a composition bias toward polar residues. A compositionally biased stretch (low complexity) spans 2541–2564 (TTTSSGVSEESSTSHSQPGSTHTT). Repeat unit 14 spans residues 2549–2567 (EESSTSHSQPGSTHTTAFP). Residues 2566–2578 (FPDSTTTPGLSRH) are compositionally biased toward polar residues. The segment covering 2579-2604 (STTSHSSPGSTDTTLLPASTTTSGPS) has biased composition (low complexity). 2 stretches are compositionally biased toward polar residues: residues 2605 to 2658 (QEST…TSSG) and 2665 to 2695 (RVHS…TTFQ). Over residues 2696-2714 (THPASTHTTPSPPSTATAP) the composition is skewed to low complexity. Residues 2716–2734 (EESTTYHRSPGSTPTTHFP) form repeat 15. Polar residues-rich tracts occupy residues 2717–2741 (ESTT…TTSG) and 2748–2764 (IFHS…SSAH). Low complexity-rich tracts occupy residues 2765 to 2777 (STTS…TTSR), 2786 to 2798 (TTLP…PGLS), and 2806 to 2819 (SSPR…SPAS). Composition is skewed to polar residues over residues 2828–2881 (ESTT…TTSV), 2888–2914 (TFHS…TEES), and 2921–2934 (PAST…TLTT). Composition is skewed to low complexity over residues 2941 to 2957 (STTF…TLSP) and 2968 to 2995 (ESTP…SLSE). Over residues 2996 to 3005 (KSTTFYTSPR) the composition is skewed to polar residues. Over residues 3015–3038 (TTTSSGVSEESSTSHSQPGSTHTT) the composition is skewed to low complexity. Residues 3023–3041 (EESSTSHSQPGSTHTTAFP) form repeat 16. Residues 3040–3094 (FPDSTTTSGLSQEPTASHSSQGSTEATLSPGSTTASSLGQQSTTFHSSPGDTETT) show a composition bias toward polar residues. The segment covering 3109–3125 (STPTHSSTGSLHTTLTP) has biased composition (low complexity). Polar residues-rich tracts occupy residues 3126–3143 (ASST…FQSW) and 3163–3187 (VSTT…TTLG). Repeat 17 spans residues 3190-3208 (EESTTVHSSPGATGTALFP). Polar residues predominate over residues 3210-3265 (RSATSVLVGEPTTSPISSGSTETTALPGSTTTAGLSEKSTTFYSSPRSPDTTLSPA). Low complexity predominate over residues 3266-3281 (STTSSGVSEESTTSHS). The stretch at 3274–3292 (EESTTSHSRPGSTHTTAFP) is repeat 18. Composition is skewed to polar residues over residues 3282–3354 (RPGS…TTAS) and 3362–3397 (PVHS…NSKD). Asparagine 3350 carries an N-linked (GlcNAc...) asparagine glycan. Composition is skewed to low complexity over residues 3413–3434 (STTS…SSTT) and 3446–3463 (SSPV…STTS). 2 consecutive repeat copies span residues 3439–3457 (EEST…TPSP) and 3467–3485 (EEST…MHFP). The segment covering 3468 to 3482 (ESTTYHSSPGSTQTM) has biased composition (polar residues). The segment covering 3499–3517 (TSHSSTTHTISSAPSTTSA) has biased composition (low complexity). Composition is skewed to polar residues over residues 3524-3539 (SYHS…HFPD) and 3568-3610 (RSTT…TTFH). Residues 3611–3639 (SSPRSPATTLSPASTTSSGVSEESTTSHS) show a composition bias toward low complexity. The stretch at 3632-3650 (EESTTSHSRPGSTHTTAFP) is repeat 21. The span at 3640–3661 (RPGSTHTTAFPDSTTTPGLSRH) shows a compositional bias: polar residues. Residues 3662–3705 (STTSHSSPGSTDTTLLPASTTTSGSSQESTTSHSSSGSTDTALS) are compositionally biased toward low complexity. Polar residues-rich tracts occupy residues 3706-3741 (PGST…TSSG) and 3748-3778 (RVHS…TAFQ). Residues 3779–3797 (THPASTHTTPSPPSTATAP) are compositionally biased toward low complexity. Repeat 22 spans residues 3799–3817 (EESTTYHRSPGSTPTTHFP). Polar residues-rich tracts occupy residues 3800–3824 (ESTT…TTSG) and 3831–3847 (IFHS…SSAH). 3 stretches are compositionally biased toward low complexity: residues 3848 to 3860 (STTS…TTSR), 3869 to 3881 (TTLP…PGLS), and 3889 to 3902 (SSPR…SPAS). Polar residues-rich tracts occupy residues 3911–3963 (ESTT…TTTS), 3971–3997 (TFHS…TEES), and 4004–4017 (PAST…TLTT). 2 stretches are compositionally biased toward low complexity: residues 4024–4036 (STTF…STGT) and 4051–4078 (ESTP…SLSE). Polar residues predominate over residues 4079-4088 (KSTTFYTSPR). Over residues 4098–4121 (TTTSSGVSEESSTSHSQPGSTHTT) the composition is skewed to low complexity. Repeat 23 spans residues 4106–4124 (EESSTSHSQPGSTHTTAFP). Residues 4123–4177 (FPDSTTTSGLSQEPTTSHSSQGSTEATLSPGSTTASSLGQQSTTFHSSPGDTETT) are compositionally biased toward polar residues. The span at 4192–4208 (STPTHSSTGSLHTTLTP) shows a compositional bias: low complexity. Over residues 4209-4226 (ASSTSTGLQEESTTFQSW) the composition is skewed to polar residues. Residues 4227-4249 (PSSSDTTPSPPSTTAVPVEVSTT) show a composition bias toward low complexity. The segment covering 4250–4270 (YHSRPSSTPTTHFSASSTTLG) has biased composition (polar residues). The stretch at 4273–4291 (EESTTVHSSPGATGTALFP) is repeat 24. Residues 4293-4348 (RSATSVLVGEPTTSPISSGSTETTALPGSTTTAGLSEKSTTFYSSPRSPDTTLSPA) show a composition bias toward polar residues. The span at 4349 to 4364 (STTSSGVSEESTTSHS) shows a compositional bias: low complexity. Composition is skewed to polar residues over residues 4369–4437 (MHTT…TTAS) and 4445–4480 (PVHS…NSKD). N-linked (GlcNAc...) asparagine glycosylation is present at asparagine 4433. 2 stretches are compositionally biased toward low complexity: residues 4496-4517 (STTS…SSTT) and 4529-4546 (SSPV…STTS). Tandem repeats lie at residues 4522–4540 (EEST…TPSP) and 4550–4568 (EEST…MHFP). Over residues 4551–4571 (ESTTYHSSPGSTQTMHFPESN) the composition is skewed to polar residues. Asparagine 4571 carries N-linked (GlcNAc...) asparagine glycosylation. Residues 4582–4600 (TSHSSTTHTISSAPSTTSA) are compositionally biased toward low complexity. 2 stretches are compositionally biased toward polar residues: residues 4607 to 4622 (SYHS…HFPD) and 4651 to 4688 (RSTT…LSEK). 2 stretches are compositionally biased toward low complexity: residues 4689–4710 (STTF…SSTT) and 4722–4739 (SSPV…STTS). 2 tandem repeats follow at residues 4715-4733 (EEST…TPSP) and 4743-4761 (EEST…MHFP). A compositionally biased stretch (polar residues) spans 4747–4768 (AYHSSPGSTQTMHFPESSTASG). The segment covering 4776–4792 (SHSSTTHTISSPPSTTS) has biased composition (low complexity). Composition is skewed to polar residues over residues 4800–4814 (SYHS…THFP) and 4887–4917 (SSRS…SQAE). The span at 4918 to 4931 (STHTTAFPASTTTS) shows a compositional bias: low complexity. 2 stretches are compositionally biased toward polar residues: residues 4932-5024 (GLSQ…STPF) and 5048-5061 (STAF…TGTT). Low complexity predominate over residues 5094-5112 (SSSTSGLTEESTTFHTSPS). The 39-residue stretch at 5116–5154 (TIVSTESLETLAPGLCQEGQIWNGKQCVCPQGYVGYQCL) folds into the EGF-like domain. A disulfide bridge connects residues cysteine 5144 and cysteine 5153. In terms of domain architecture, SEA spans 5168–5275 (LNATLGMTVK…TRTTLLDPDS (108 aa)). Asparagine 5169, asparagine 5182, asparagine 5197, asparagine 5228, and asparagine 5264 each carry an N-linked (GlcNAc...) asparagine glycan. Positions 5226–5233 (LLNGSIVV) match the Cleavage motif motif. A helical transmembrane segment spans residues 5381-5401 (GIVGAVMAVLLLALIILIILF). Residues 5402–5478 (SLSQRKRHRE…QRPEMVASTV (77 aa)) lie on the Cytoplasmic side of the membrane.

As to expression, ubiquitous, with higher expression in colon. Down-regulated in colorectal cancer as well as in the colon of patients with ulcerative colitis (UC) and Crohn's disease (CD).

The protein localises to the membrane. In terms of biological role, involved in epithelial cell protection, adhesion modulation, and signaling. May be involved in epithelial cell growth regulation. Stimulated by both cytokine TNF-alpha and TGF-beta in intestinal epithelium. The chain is Mucin-12 (MUC12) from Homo sapiens (Human).